Consider the following 130-residue polypeptide: MRRILFKSKIHRATVTQADLDYEGSVTIDRDLLRAADIVENEKVAVWNITQGTRLETYALEGEAGSGVICINGAAAHLNKPGDLVILATFAEVEEAEVANWKPTVVFVDKDNRVVPGQTKEIPGPQRRSA.

Residue Ser25 is the Schiff-base intermediate with substrate; via pyruvic acid of the active site. Ser25 is subject to Pyruvic acid (Ser). Thr57 contacts substrate. Tyr58 functions as the Proton donor in the catalytic mechanism. Gly73–Ala75 contributes to the substrate binding site.

Belongs to the PanD family. In terms of assembly, heterooctamer of four alpha and four beta subunits. Requires pyruvate as cofactor. Post-translationally, is synthesized initially as an inactive proenzyme, which is activated by self-cleavage at a specific serine bond to produce a beta-subunit with a hydroxyl group at its C-terminus and an alpha-subunit with a pyruvoyl group at its N-terminus.

It is found in the cytoplasm. It carries out the reaction L-aspartate + H(+) = beta-alanine + CO2. It participates in cofactor biosynthesis; (R)-pantothenate biosynthesis; beta-alanine from L-aspartate: step 1/1. In terms of biological role, catalyzes the pyruvoyl-dependent decarboxylation of aspartate to produce beta-alanine. The sequence is that of Aspartate 1-decarboxylase from Myxococcus xanthus (strain DK1622).